We begin with the raw amino-acid sequence, 658 residues long: UvrABC system protein B (658 aa).

The 388-residue stretch at 26–413 (EGINSGKKKQ…SPEVIEQIIR (388 aa)) folds into the Helicase ATP-binding domain. Residue 39 to 46 (GATGTGKT) coordinates ATP. The short motif at 92–115 (YYDYYQPEAYVPQTDTFIEKDAQI) is the Beta-hairpin element. One can recognise a Helicase C-terminal domain in the interval 430–596 (QIDDLLGEIQ…TIQKGVRDVI (167 aa)). The UVR domain maps to 622–657 (EKTIAKMEAEMKEAAKALDFERAAELRDLLLELKAE).

This sequence belongs to the UvrB family. In terms of assembly, forms a heterotetramer with UvrA during the search for lesions. Interacts with UvrC in an incision complex.

The protein localises to the cytoplasm. The UvrABC repair system catalyzes the recognition and processing of DNA lesions. A damage recognition complex composed of 2 UvrA and 2 UvrB subunits scans DNA for abnormalities. Upon binding of the UvrA(2)B(2) complex to a putative damaged site, the DNA wraps around one UvrB monomer. DNA wrap is dependent on ATP binding by UvrB and probably causes local melting of the DNA helix, facilitating insertion of UvrB beta-hairpin between the DNA strands. Then UvrB probes one DNA strand for the presence of a lesion. If a lesion is found the UvrA subunits dissociate and the UvrB-DNA preincision complex is formed. This complex is subsequently bound by UvrC and the second UvrB is released. If no lesion is found, the DNA wraps around the other UvrB subunit that will check the other stand for damage. This chain is UvrABC system protein B, found in Bacillus cereus (strain ZK / E33L).